We begin with the raw amino-acid sequence, 288 residues long: Lipoyl synthase (288 aa).

[4Fe-4S] cluster-binding residues include cysteine 42, cysteine 47, cysteine 53, cysteine 68, cysteine 72, cysteine 75, and serine 280. The region spanning tryptophan 54–arginine 269 is the Radical SAM core domain.

This sequence belongs to the radical SAM superfamily. Lipoyl synthase family. [4Fe-4S] cluster is required as a cofactor.

It localises to the cytoplasm. It catalyses the reaction [[Fe-S] cluster scaffold protein carrying a second [4Fe-4S](2+) cluster] + N(6)-octanoyl-L-lysyl-[protein] + 2 oxidized [2Fe-2S]-[ferredoxin] + 2 S-adenosyl-L-methionine + 4 H(+) = [[Fe-S] cluster scaffold protein] + N(6)-[(R)-dihydrolipoyl]-L-lysyl-[protein] + 4 Fe(3+) + 2 hydrogen sulfide + 2 5'-deoxyadenosine + 2 L-methionine + 2 reduced [2Fe-2S]-[ferredoxin]. The protein operates within protein modification; protein lipoylation via endogenous pathway; protein N(6)-(lipoyl)lysine from octanoyl-[acyl-carrier-protein]: step 2/2. Functionally, catalyzes the radical-mediated insertion of two sulfur atoms into the C-6 and C-8 positions of the octanoyl moiety bound to the lipoyl domains of lipoate-dependent enzymes, thereby converting the octanoylated domains into lipoylated derivatives. The chain is Lipoyl synthase from Flavobacterium johnsoniae (strain ATCC 17061 / DSM 2064 / JCM 8514 / BCRC 14874 / CCUG 350202 / NBRC 14942 / NCIMB 11054 / UW101) (Cytophaga johnsonae).